The chain runs to 94 residues: Cystatin-A3 (94 aa).

Residues 46–50 (QLVNG) carry the Secondary area of contact motif.

It belongs to the cystatin family.

Its subcellular location is the cytoplasm. In terms of biological role, intracellular thiol proteinase inhibitor. In Dictyostelium discoideum (Social amoeba), this protein is Cystatin-A3 (cpiC).